The sequence spans 313 residues: Methionyl-tRNA formyltransferase (313 aa).

A disordered region spans residues 32–51; that stretch reads QPDRRKGRGKELQPPPAKRK. 109–112 contacts (6S)-5,6,7,8-tetrahydrofolate; the sequence is SLLP.

This sequence belongs to the Fmt family.

The enzyme catalyses L-methionyl-tRNA(fMet) + (6R)-10-formyltetrahydrofolate = N-formyl-L-methionyl-tRNA(fMet) + (6S)-5,6,7,8-tetrahydrofolate + H(+). Its function is as follows. Attaches a formyl group to the free amino group of methionyl-tRNA(fMet). The formyl group appears to play a dual role in the initiator identity of N-formylmethionyl-tRNA by promoting its recognition by IF2 and preventing the misappropriation of this tRNA by the elongation apparatus. This chain is Methionyl-tRNA formyltransferase, found in Natranaerobius thermophilus (strain ATCC BAA-1301 / DSM 18059 / JW/NM-WN-LF).